The primary structure comprises 459 residues: GTPase Der (459 aa).

2 EngA-type G domains span residues 4–169 (PLVA…PEVA) and 179–355 (IAVA…AAHR). GTP is bound by residues 10-17 (GRPNVGKS), 57-61 (DTGGL), 120-123 (NKCE), 185-192 (GRPNVGKS), 232-236 (DTAGI), and 297-300 (NKWD). The region spanning 356-441 (KRIATSVVNE…PIRFRWRSKS (86 aa)) is the KH-like domain.

It belongs to the TRAFAC class TrmE-Era-EngA-EngB-Septin-like GTPase superfamily. EngA (Der) GTPase family. In terms of assembly, associates with the 50S ribosomal subunit.

In terms of biological role, GTPase that plays an essential role in the late steps of ribosome biogenesis. The protein is GTPase Der of Synechococcus sp. (strain JA-3-3Ab) (Cyanobacteria bacterium Yellowstone A-Prime).